The following is a 264-amino-acid chain: THAP domain-containing protein 10 (264 aa).

The THAP-type zinc finger occupies M1 to H90. 2 disordered regions span residues H90–G136 and T160–R195. A compositionally biased stretch (basic and acidic residues) spans G99–E122. Positions T160–P175 are enriched in polar residues.

The sequence is that of THAP domain-containing protein 10 (THAP10) from Pongo abelii (Sumatran orangutan).